We begin with the raw amino-acid sequence, 292 residues long: Pyridoxal 5'-phosphate synthase subunit PdxS (292 aa).

D-ribose 5-phosphate is bound at residue Asp-22. Residue Lys-79 is the Schiff-base intermediate with D-ribose 5-phosphate of the active site. Gly-151 serves as a coordination point for D-ribose 5-phosphate. Arg-163 provides a ligand contact to D-glyceraldehyde 3-phosphate. Residues Gly-212 and 233 to 234 (GS) each bind D-ribose 5-phosphate.

Belongs to the PdxS/SNZ family. As to quaternary structure, in the presence of PdxT, forms a dodecamer of heterodimers.

It carries out the reaction aldehydo-D-ribose 5-phosphate + D-glyceraldehyde 3-phosphate + L-glutamine = pyridoxal 5'-phosphate + L-glutamate + phosphate + 3 H2O + H(+). The protein operates within cofactor biosynthesis; pyridoxal 5'-phosphate biosynthesis. In terms of biological role, catalyzes the formation of pyridoxal 5'-phosphate from ribose 5-phosphate (RBP), glyceraldehyde 3-phosphate (G3P) and ammonia. The ammonia is provided by the PdxT subunit. Can also use ribulose 5-phosphate and dihydroxyacetone phosphate as substrates, resulting from enzyme-catalyzed isomerization of RBP and G3P, respectively. In Ruminiclostridium cellulolyticum (strain ATCC 35319 / DSM 5812 / JCM 6584 / H10) (Clostridium cellulolyticum), this protein is Pyridoxal 5'-phosphate synthase subunit PdxS.